A 150-amino-acid chain; its full sequence is Dual specificity protein phosphatase 23 (150 aa).

Residues 7 to 150 (NFSWVLPGRL…AVFQFYQRTK (144 aa)) form the Tyrosine-protein phosphatase domain. The active-site Phosphocysteine intermediate is cysteine 95.

It belongs to the protein-tyrosine phosphatase family. Non-receptor class dual specificity subfamily. Widely expressed. Highly expressed in spleen, prostate, colon, adrenal gland, mammary gland, thyroid and trachea. Expressed at lower level in uterus, small intestine, bladder, bone marrow, brain, spinal cord and stomach.

The protein resides in the cytoplasm. The protein localises to the cytosol. It localises to the nucleus. It catalyses the reaction O-phospho-L-tyrosyl-[protein] + H2O = L-tyrosyl-[protein] + phosphate. The catalysed reaction is O-phospho-L-seryl-[protein] + H2O = L-seryl-[protein] + phosphate. The enzyme catalyses O-phospho-L-threonyl-[protein] + H2O = L-threonyl-[protein] + phosphate. Functionally, protein phosphatase that mediates dephosphorylation of proteins phosphorylated on Tyr and Ser/Thr residues. In vitro, it can dephosphorylate p44-ERK1 (MAPK3) but not p54 SAPK-beta (MAPK10) in vitro. Able to enhance activation of JNK and p38 (MAPK14). This Homo sapiens (Human) protein is Dual specificity protein phosphatase 23 (DUSP23).